Consider the following 268-residue polypeptide: UPF0328 protein ECU05_1640/ECU11_0090 (268 aa).

Belongs to the UPF0328 family.

In Encephalitozoon cuniculi (strain GB-M1) (Microsporidian parasite), this protein is UPF0328 protein ECU05_1640/ECU11_0090.